Here is a 430-residue protein sequence, read N- to C-terminus: Endochitinase 46 (430 aa).

Residues 1–22 (MLSFLGKSVALLAALQATLSSA) form the signal peptide. Residues 23–35 (SPLATEERSIEKR) constitute a propeptide that is removed on maturation. Positions 39–408 (YANSVYFTNW…GTSHRALGGL (370 aa)) constitute a GH18 domain. Chitin contacts are provided by residues 103 to 104 (GT) and 130 to 133 (GGWT). Glu172 functions as the Proton donor in the catalytic mechanism. Residue Tyr173 participates in chitin binding. N-linked (GlcNAc...) asparagine glycosylation is present at Asn219. Chitin contacts are provided by residues 238 to 241 (MAYD) and Trp385.

The protein belongs to the glycosyl hydrolase 18 family. Chitinase class V subfamily.

The protein localises to the secreted. It carries out the reaction Random endo-hydrolysis of N-acetyl-beta-D-glucosaminide (1-&gt;4)-beta-linkages in chitin and chitodextrins.. Functionally, secreted chitinase involved in the degradation of chitin, a component of the cell walls of fungi and exoskeletal elements of some animals (including worms and arthropods). Plays a morphogenetic role during apical growth, cell division and differentiation (cell wall morphogenesis). Also acts as an antifungal agent. Involved in the degradation and further assimilation of phytopathogenic fungi, namely mycoparasitism, the major mechanism accounting for the antagonistic activity against phytopathogenic fungi displayed by Trichoderma. This Trichoderma harzianum (Hypocrea lixii) protein is Endochitinase 46 (chit46).